We begin with the raw amino-acid sequence, 200 residues long: Proteasome subunit beta 2 (200 aa).

A propeptide (removed in mature form; by autocatalysis) is located at residue Met1. Thr2 acts as the Nucleophile in catalysis.

Belongs to the peptidase T1B family. The 20S proteasome core is composed of 14 alpha and 14 beta subunits that assemble into four stacked heptameric rings, resulting in a barrel-shaped structure. The two inner rings, each composed of seven catalytic beta subunits, are sandwiched by two outer rings, each composed of seven alpha subunits. The catalytic chamber with the active sites is on the inside of the barrel. Has a gated structure, the ends of the cylinder being occluded by the N-termini of the alpha-subunits. Is capped at one or both ends by the proteasome regulatory ATPase, PAN.

It is found in the cytoplasm. It carries out the reaction Cleavage of peptide bonds with very broad specificity.. With respect to regulation, the formation of the proteasomal ATPase PAN-20S proteasome complex, via the docking of the C-termini of PAN into the intersubunit pockets in the alpha-rings, triggers opening of the gate for substrate entry. Interconversion between the open-gate and close-gate conformations leads to a dynamic regulation of the 20S proteasome proteolysis activity. In terms of biological role, component of the proteasome core, a large protease complex with broad specificity involved in protein degradation. The protein is Proteasome subunit beta 2 of Pyrobaculum islandicum (strain DSM 4184 / JCM 9189 / GEO3).